The sequence spans 314 residues: Signal peptidase I (314 aa).

The chain crosses the membrane as a helical span at residues 5–25; the sequence is LTIFLLISTLVTGIFWSFYCI. Over 26 to 63 the chain is Cytoplasmic; that stretch reads KSFKNYLINKKIINNNNFHQEKIEKSKNKTYFLKSLAS. A helical transmembrane segment spans residues 64-84; that stretch reads FFPIFLAIFIIRSFIYEPFQI. Residues 85–314 lie on the Extracellular side of the membrane; sequence PSGSMMPTLL…IRINRIGSIH (230 aa). Catalysis depends on residues Ser-88 and Lys-143.

Belongs to the peptidase S26 family.

The protein resides in the cell membrane. The catalysed reaction is Cleavage of hydrophobic, N-terminal signal or leader sequences from secreted and periplasmic proteins.. This is Signal peptidase I (lepB) from Buchnera aphidicola subsp. Acyrthosiphon pisum (strain APS) (Acyrthosiphon pisum symbiotic bacterium).